Here is a 500-residue protein sequence, read N- to C-terminus: Probable malate:quinone oxidoreductase (500 aa).

This sequence belongs to the MQO family. The cofactor is FAD.

The catalysed reaction is (S)-malate + a quinone = a quinol + oxaloacetate. It functions in the pathway carbohydrate metabolism; tricarboxylic acid cycle; oxaloacetate from (S)-malate (quinone route): step 1/1. The polypeptide is Probable malate:quinone oxidoreductase (Bacillus mycoides (strain KBAB4) (Bacillus weihenstephanensis)).